A 262-amino-acid chain; its full sequence is tRNA pseudouridine synthase A (262 aa).

The active-site Nucleophile is the aspartate 51. Tyrosine 109 lines the substrate pocket.

It belongs to the tRNA pseudouridine synthase TruA family. As to quaternary structure, homodimer.

The enzyme catalyses uridine(38/39/40) in tRNA = pseudouridine(38/39/40) in tRNA. Formation of pseudouridine at positions 38, 39 and 40 in the anticodon stem and loop of transfer RNAs. In Actinobacillus pleuropneumoniae serotype 5b (strain L20), this protein is tRNA pseudouridine synthase A.